We begin with the raw amino-acid sequence, 66 residues long: Beta-toxin ChFII.7 (66 aa).

The 66-residue stretch at lysine 1 to asparagine 66 folds into the LCN-type CS-alpha/beta domain. Intrachain disulfides connect cysteine 12–cysteine 65, cysteine 16–cysteine 41, cysteine 25–cysteine 46, and cysteine 29–cysteine 48. At asparagine 66 the chain carries Asparagine amide.

In terms of tissue distribution, expressed by the venom gland.

It is found in the secreted. Beta toxins bind voltage independently at site-4 of sodium channels (Nav) and shift the activation voltage toward more negative potentials, thereby affecting sodium channel activation CC and promoting spontaneous and repetitive firing. The chain is Beta-toxin ChFII.7 from Centruroides hirsutipalpus (Scorpion).